Reading from the N-terminus, the 302-residue chain is Putative peptide permease protein BRA0407/BS1330_II0404 (302 aa).

The interval 1–22 (MRSSIHASRLRKMGQSIPASTG) is disordered. 6 consecutive transmembrane segments (helical) span residues 38-58 (IFGL…PLWL), 101-121 (LLVA…IGAI), 147-167 (IFLL…VVVI), 200-222 (AGLG…VVYA), 230-250 (ILLE…AASW), and 268-288 (WQWL…NFIG). An ABC transmembrane type-1 domain is found at 97 to 288 (GRISLLVAVS…LAVLAINFIG (192 aa)).

The protein belongs to the binding-protein-dependent transport system permease family. As to quaternary structure, the complex is composed of two ATP-binding proteins (BRA0404 and BRA0405), two transmembrane proteins (BRA0407 and BRA0408) and a solute-binding protein (BRA0409).

The protein localises to the cell inner membrane. Its function is as follows. Probably part of an ABC transporter complex that could be involved in peptide import. Probably responsible for the translocation of the substrate across the membrane. This chain is Putative peptide permease protein BRA0407/BS1330_II0404, found in Brucella suis biovar 1 (strain 1330).